A 378-amino-acid polypeptide reads, in one-letter code: Integrator complex assembly factor WDR73 (378 aa).

WD repeat units follow at residues 73–113 (DFKV…VWQV), 121–163 (KAVS…VVDL), 167–205 (KTTY…LVDT), 214–255 (NRSP…LLDP), 266–305 (QCPV…VYDA), and 322–371 (EPLF…VWDW).

This sequence belongs to the WD repeat WDR73 family. As to quaternary structure, interacts with INTS9 and INTS11; the interaction is direct. Part of the multiprotein complex composed of BRAT1, WDR73, as well as integrator complex subunits INTS9 and INTS11. Expressed in kidney and brain. In the kidney, expressed in glomeruli, most probably in podocytes, and in tubules (at protein level). In the brain, expressed in the cerebellum, with high levels in Purkinje cells and their projecting axons, in the deep cerebellar nuclei and in pyramidal neurons of the cerebral cortex (at protein level). In the white matter, mainly present in astrocytes, but not in oligodendrocytes (at protein level). Also highly expressed in endothelial cells of cerebral capillaries (at protein level).

It is found in the cytoplasm. The protein localises to the cytoskeleton. The protein resides in the spindle. Its subcellular location is the spindle pole. It localises to the cleavage furrow. Functionally, component of a multiprotein complex required for the assembly of the RNA endonuclease module of the integrator complex. Associates with INTS9 and INTS11 in the cytoplasm, stabilizing the INTS9-INTS11 heterodimer and blocking the active site of INTS11. BRAT1 then joins the complex and plugs the active site of INTS11, leading to WDR73 release and nuclear import of INTS9 and INTS11. The sequence is that of Integrator complex assembly factor WDR73 from Homo sapiens (Human).